The following is a 446-amino-acid chain: tRNA-2-methylthio-N(6)-dimethylallyladenosine synthase (446 aa).

The region spanning 3-124 is the MTTase N-terminal domain; that stretch reads KKLYIKTYGC…LPELISKVVR (122 aa). Cys12, Cys48, Cys87, Cys162, Cys166, and Cys169 together coordinate [4Fe-4S] cluster. The 233-residue stretch at 148–380 folds into the Radical SAM core domain; the sequence is YPQGASSFIS…QKELAAQQLA (233 aa). One can recognise a TRAM domain in the interval 383–446; that stretch reads ESCIGSTMKV…LNSLSGEIYR (64 aa).

This sequence belongs to the methylthiotransferase family. MiaB subfamily. Monomer. It depends on [4Fe-4S] cluster as a cofactor.

It is found in the cytoplasm. It catalyses the reaction N(6)-dimethylallyladenosine(37) in tRNA + (sulfur carrier)-SH + AH2 + 2 S-adenosyl-L-methionine = 2-methylsulfanyl-N(6)-dimethylallyladenosine(37) in tRNA + (sulfur carrier)-H + 5'-deoxyadenosine + L-methionine + A + S-adenosyl-L-homocysteine + 2 H(+). Its function is as follows. Catalyzes the methylthiolation of N6-(dimethylallyl)adenosine (i(6)A), leading to the formation of 2-methylthio-N6-(dimethylallyl)adenosine (ms(2)i(6)A) at position 37 in tRNAs that read codons beginning with uridine. This Rickettsia bellii (strain RML369-C) protein is tRNA-2-methylthio-N(6)-dimethylallyladenosine synthase.